Reading from the N-terminus, the 266-residue chain is F-actin-capping protein subunit beta (266 aa).

Belongs to the F-actin-capping protein beta subunit family. In terms of assembly, component of the F-actin capping complex, composed of a heterodimer of an alpha and a beta subunit.

It is found in the cytoplasm. The protein resides in the cytoskeleton. The protein localises to the actin patch. Functionally, F-actin-capping proteins bind in a Ca(2+)-independent manner to the fast growing ends of actin filaments (barbed end) thereby blocking the exchange of subunits at these ends. Unlike other capping proteins (such as gelsolin and severin), these proteins do not sever actin filaments. This is F-actin-capping protein subunit beta (cap2) from Emericella nidulans (strain FGSC A4 / ATCC 38163 / CBS 112.46 / NRRL 194 / M139) (Aspergillus nidulans).